The primary structure comprises 211 residues: Endo-1,4-beta-xylanase 3 (211 aa).

Positions 1–27 (MKVTAAFAGLLVTAFAAPVPEPVLVSR) are cleaved as a signal peptide. The GH11 domain maps to 28-210 (SAGINYVQNY…GAGSASVTIS (183 aa)). The active-site Nucleophile is E106. C119 and C138 are joined by a disulfide. The active-site Proton donor is the E197.

The protein belongs to the glycosyl hydrolase 11 (cellulase G) family.

Its subcellular location is the secreted. It carries out the reaction Endohydrolysis of (1-&gt;4)-beta-D-xylosidic linkages in xylans.. It participates in glycan degradation; xylan degradation. This chain is Endo-1,4-beta-xylanase 3 (xynC), found in Aspergillus kawachii (strain NBRC 4308) (White koji mold).